Here is a 119-residue protein sequence, read N- to C-terminus: HTH-type transcriptional regulator SarX (119 aa).

A DNA-binding region (H-T-H motif) is located at residues 55–78 (LKTAMDELDLSRTKLLVSIRRLIE).

This sequence belongs to the SarA family.

The protein localises to the cytoplasm. In terms of biological role, involved in the regulation of virulence genes. Acts as a repressor of the agr locus and consequently targets genes regulated by the agr system such as sspA, hla and hlb. Binds directly to the agr promoter region. The polypeptide is HTH-type transcriptional regulator SarX (sarX) (Staphylococcus aureus (strain bovine RF122 / ET3-1)).